The primary structure comprises 142 residues: Putative pre-16S rRNA nuclease (142 aa).

The protein belongs to the YqgF nuclease family.

It is found in the cytoplasm. Its function is as follows. Could be a nuclease involved in processing of the 5'-end of pre-16S rRNA. This Staphylococcus saprophyticus subsp. saprophyticus (strain ATCC 15305 / DSM 20229 / NCIMB 8711 / NCTC 7292 / S-41) protein is Putative pre-16S rRNA nuclease.